The following is a 276-amino-acid chain: Undecaprenyl-diphosphatase (276 aa).

7 helical membrane-spanning segments follow: residues 12–34 (LGIV…IVVG), 43–63 (TATA…MWEF), 85–105 (FNLL…ADLI), 108–128 (WLFN…IMLW), 185–205 (TEFS…YSLF), 218–238 (IFAI…RALL), and 249–269 (FAWY…LHLI).

Belongs to the UppP family.

Its subcellular location is the cell inner membrane. It carries out the reaction di-trans,octa-cis-undecaprenyl diphosphate + H2O = di-trans,octa-cis-undecaprenyl phosphate + phosphate + H(+). Its function is as follows. Catalyzes the dephosphorylation of undecaprenyl diphosphate (UPP). Confers resistance to bacitracin. The sequence is that of Undecaprenyl-diphosphatase from Ectopseudomonas mendocina (strain ymp) (Pseudomonas mendocina).